Reading from the N-terminus, the 332-residue chain is Methionine import ATP-binding protein MetN (332 aa).

In terms of domain architecture, ABC transporter spans 2–239; the sequence is ITFQDVSKTY…PASDTARRFV (238 aa). 36-43 is an ATP binding site; it reads GASGAGKS.

The protein belongs to the ABC transporter superfamily. Methionine importer (TC 3.A.1.24) family. The complex is composed of two ATP-binding proteins (MetN), two transmembrane proteins (MetI) and a solute-binding protein (MetQ).

It localises to the cell inner membrane. It carries out the reaction L-methionine(out) + ATP + H2O = L-methionine(in) + ADP + phosphate + H(+). The catalysed reaction is D-methionine(out) + ATP + H2O = D-methionine(in) + ADP + phosphate + H(+). Part of the ABC transporter complex MetNIQ involved in methionine import. Responsible for energy coupling to the transport system. The sequence is that of Methionine import ATP-binding protein MetN from Caulobacter vibrioides (strain ATCC 19089 / CIP 103742 / CB 15) (Caulobacter crescentus).